We begin with the raw amino-acid sequence, 515 residues long: G-protein coupled receptor 176 (515 aa).

A compositionally biased stretch (polar residues) spans 1-16; it reads MGHNGSWISPNASEPH. Residues 1 to 20 are disordered; it reads MGHNGSWISPNASEPHNASG. Residues 1–42 lie on the Extracellular side of the membrane; it reads MGHNGSWISPNASEPHNASGAEAAGVNRSALGEFGEAQLYRQ. Residues N4, N11, N17, and N27 are each glycosylated (N-linked (GlcNAc...) asparagine). A helical membrane pass occupies residues 43–63; that stretch reads FTTTVQVVIFIGSLLGNFMVL. Topologically, residues 64 to 82 are cytoplasmic; that stretch reads WSTCRTTVFKSVTNRFIKN. Residues 83-103 form a helical membrane-spanning segment; the sequence is LACSGICASLVCVPFDIILST. Over 104–118 the chain is Extracellular; sequence SPHCCWWIYTMLFCK. A helical transmembrane segment spans residues 119 to 139; sequence VVKFLHKVFCSVTILSFPAIA. Residues 140 to 160 are Cytoplasmic-facing; the sequence is LDRYYSVLYPLERKISDAKSR. Residues 161-181 traverse the membrane as a helical segment; the sequence is ELVMYIWAHAVVASVPVFAVT. Topologically, residues 182–207 are extracellular; the sequence is NVADIYATSTCTEVWSNSLGHLVYVL. Residues 208–228 form a helical membrane-spanning segment; that stretch reads VYNITTVIVPVVVVFLFLILI. Residues 229–267 are Cytoplasmic-facing; sequence RRALSASQKKKVIIAALRTPQNTISIPYASQREAELHAT. Residues 268-288 form a helical membrane-spanning segment; it reads LLSMVMVFILCSVPYATLVVY. The Extracellular segment spans residues 289–299; that stretch reads QTVLNVPDTSV. Residues 300–320 traverse the membrane as a helical segment; it reads FLLLTAVWLPKVSLLANPVLF. Residues 321-515 lie on the Cytoplasmic side of the membrane; it reads LTVNKSVRKC…KVSIFPKVDS (195 aa).

The protein belongs to the G-protein coupled receptor 1 family.

It is found in the cell membrane. In terms of biological role, orphan receptor involved in normal circadian rhythm behavior. Acts through the G-protein subclass G(z)-alpha and has an agonist-independent basal activity to repress cAMP production. The polypeptide is G-protein coupled receptor 176 (GPR176) (Homo sapiens (Human)).